A 243-amino-acid chain; its full sequence is ATP-dependent dethiobiotin synthetase BioD (243 aa).

An ATP-binding site is contributed by aspartate 12–leucine 17. Threonine 16 is a binding site for Mg(2+). The active site involves lysine 37. Serine 41 lines the substrate pocket. ATP is bound by residues aspartate 54, glutamate 115 to glycine 118, and asparagine 179 to methionine 180. Aspartate 54 and glutamate 115 together coordinate Mg(2+).

This sequence belongs to the dethiobiotin synthetase family. As to quaternary structure, homodimer. Mg(2+) is required as a cofactor.

It localises to the cytoplasm. It catalyses the reaction (7R,8S)-7,8-diammoniononanoate + CO2 + ATP = (4R,5S)-dethiobiotin + ADP + phosphate + 3 H(+). It participates in cofactor biosynthesis; biotin biosynthesis; biotin from 7,8-diaminononanoate: step 1/2. Catalyzes a mechanistically unusual reaction, the ATP-dependent insertion of CO2 between the N7 and N8 nitrogen atoms of 7,8-diaminopelargonic acid (DAPA, also called 7,8-diammoniononanoate) to form a ureido ring. The sequence is that of ATP-dependent dethiobiotin synthetase BioD from Caldicellulosiruptor saccharolyticus (strain ATCC 43494 / DSM 8903 / Tp8T 6331).